A 318-amino-acid chain; its full sequence is uncharacterized protein (318 aa).

It belongs to the glycosyltransferase 2 family.

This is an uncharacterized protein from Rickettsia prowazekii (strain Madrid E).